We begin with the raw amino-acid sequence, 480 residues long: REST corepressor 1 (480 aa).

The interval 1 to 105 (MPAMVEKGPE…GGGMRVGPQY (105 aa)) is disordered. Composition is skewed to low complexity over residues 21–58 (AASA…AAAA) and 66–89 (SLAA…SGSS). The segment at 72 to 251 (PNGNSGSNSW…RHARKQKRER (180 aa)) is interaction with HDAC1. Positions 97–183 (GGMRVGPQYQ…KSLADLPNFT (87 aa)) constitute an ELM2 domain. Lys-116 is covalently cross-linked (Glycyl lysine isopeptide (Lys-Gly) (interchain with G-Cter in SUMO2)). Ser-121 is modified (phosphoserine). The 52-residue stretch at 184–235 (PFPDEWTVEDKVLFEQAFSFHGKTFHRIQQMLPDKSIASLVKFYYSWKKTRT) folds into the SANT 1 domain. A coiled-coil region spans residues 238–265 (SVMDRHARKQKREREESEDELEETNGSN). The disordered stretch occupies residues 238 to 308 (SVMDRHARKQ…AKNRAKRKPP (71 aa)). Ser-254 is subject to Phosphoserine. Positions 272 to 282 (DPNKESKKEVP) are enriched in basic and acidic residues. Residues 290-378 (VKKEKHSTQA…LPEVIQKCNA (89 aa)) are interaction with KDM1A. Residue Lys-291 forms a Glycyl lysine isopeptide (Lys-Gly) (interchain with G-Cter in SUMO2) linkage. Positions 328–363 (ATTVLRQLDMELVSIKRQIQNIKQTNSALKEKLDGG) form a coiled coil. Residues 375–426 (KCNARWTTEEQLLAVQAIRKYGRDFQAISDVIGNKSVVQVKNFFVNYRRRFN) form the SANT 2 domain. Residues 436-466 (AEHGKDETNGPANQKPVKSPESSIKIPEEED) form a disordered region. A Phosphoserine modification is found at Ser-454. Lys-460 is covalently cross-linked (Glycyl lysine isopeptide (Lys-Gly) (interchain with G-Cter in SUMO2)).

The protein belongs to the CoREST family. Component of a BHC histone deacetylase complex that contains HDAC1, HDAC2, HMG20B/BRAF35, KDM1A, RCOR1/CoREST and PHF21A/BHC80. The BHC complex may also contain ZMYM2, ZNF217, ZMYM3, GSE1 and GTF2I. Interacts with REST. Interacts with the SMARCE1/BAF57, suggesting that the BHC complex may recruit the ATP-dependent chromatin-remodeling SWI-SNF complex. Interacts directly with GFI1 and GFI1B in a RCOR/GFI/KDM1A/HDAC complex. Interacts with INMS1. Interacts with SOX2. Expressed in the external germinal layer (EGL) and internal granular layer (IGL) of the cerebellum and in Purkinje cells (at protein level).

It is found in the nucleus. In terms of biological role, essential component of the BHC complex, a corepressor complex that represses transcription of neuron-specific genes in non-neuronal cells. The BHC complex is recruited at RE1/NRSE sites by REST and acts by deacetylating and demethylating specific sites on histones, thereby acting as a chromatin modifier. In the BHC complex, it serves as a molecular beacon for the recruitment of molecular machinery, including MeCP2 and SUV39H1, that imposes silencing across a chromosomal interval. Plays a central role in demethylation of Lys-4 of histone H3 by promoting demethylase activity of KDM1A on core histones and nucleosomal substrates. It also protects KDM1A from the proteasome. Component of a RCOR/GFI/KDM1A/HDAC complex that suppresses, via histone deacetylase (HDAC) recruitment, a number of genes implicated in multilineage blood cell development and controls hematopoietic differentiation. The sequence is that of REST corepressor 1 (Rcor1) from Mus musculus (Mouse).